A 615-amino-acid chain; its full sequence is Matrix metalloproteinase-25 (615 aa).

The propeptide occupies 1 to 162; it reads MCFPGSQISP…AAGLVRRRRR (162 aa). The helical transmembrane segment at 53–73 threads the bilayer; that stretch reads ILRLPAFGLPLLALLLVPLLP. The Cysteine switch motif lies at 143-150; it reads PRCSLPDV. The Zn(2+) site is built by Cys-145 and His-287. Glu-288 is an active-site residue. 2 residues coordinate Zn(2+): His-291 and His-297. The interval 336-366 is disordered; that stretch reads VSQNPNARPTRKPLVPPPQPPAMPPDSPATP. A compositionally biased stretch (pro residues) spans 349-366; that stretch reads LVPPPQPPAMPPDSPATP. Hemopexin repeat units follow at residues 368 to 417, 421 to 466, 467 to 515, and 516 to 562; these read PDRC…WEGL, VKVI…GLPP, GEDV…DGAP, and FAPD…WLDC. The cysteines at positions 371 and 562 are disulfide-linked. The disordered stretch occupies residues 547–582; sequence AESDSPQPIGPKWLDCPAPNSDPRVTSPPKTTSKTR. Ala-593 carries GPI-anchor amidated alanine lipidation. Positions 594-615 are cleaved as a propeptide — removed in mature form; the sequence is SEQLSPLLLPLLPLVAGEVFSY.

The protein belongs to the peptidase M10A family. The cofactor is Zn(2+). Ca(2+) is required as a cofactor. Post-translationally, the precursor is cleaved by a furin endopeptidase.

The protein localises to the cell membrane. In terms of biological role, may activate progelatinase A. The sequence is that of Matrix metalloproteinase-25 (Mmp25) from Mus musculus (Mouse).